Consider the following 451-residue polypeptide: 2-succinylbenzoate--CoA ligase (451 aa).

This sequence belongs to the ATP-dependent AMP-binding enzyme family. MenE subfamily.

The enzyme catalyses 2-succinylbenzoate + ATP + CoA = 2-succinylbenzoyl-CoA + AMP + diphosphate. It participates in quinol/quinone metabolism; 1,4-dihydroxy-2-naphthoate biosynthesis; 1,4-dihydroxy-2-naphthoate from chorismate: step 5/7. It functions in the pathway quinol/quinone metabolism; menaquinone biosynthesis. Converts 2-succinylbenzoate (OSB) to 2-succinylbenzoyl-CoA (OSB-CoA). The sequence is that of 2-succinylbenzoate--CoA ligase from Lactococcus lactis subsp. lactis (strain IL1403) (Streptococcus lactis).